Reading from the N-terminus, the 677-residue chain is Regulator of G-protein signaling 9 (677 aa).

Positions 30 to 105 (PETGVRMQNQ…PDSSLYRFQT (76 aa)) constitute a DEP domain. Positions 219 to 280 (VTAVRKEIMY…ITDDTQFWDL (62 aa)) constitute a G protein gamma domain. Residues 295-416 (RWAFNFSELI…SPIYKEMLAK (122 aa)) enclose the RGS domain. 2 disordered regions span residues 530–571 (SSGL…RAPL) and 639–677 (DSGPCLMDSDDPGAGESGDQTTEKEVICPWESLAEGKAG).

In terms of assembly, heterodimer with GNB5. Interacts with RGS7BP, leading to regulate the subcellular location of the heterodimer formed with GNB5. Component of the RGS9-1-Gbeta5 complex composed of RGS9 (RGS9-1), Gbeta5 (GNB5) and RGS9BP. Interacts with PDE6G and GNAT1. Expressed in the central nervous system. Isoform RGS9L is found in striatum, hypothalamus and nucleus accumbens while isoform RGS9S is expressed in retina and pineal gland.

Its subcellular location is the membrane. In terms of biological role, inhibits signal transduction by increasing the GTPase activity of G protein alpha subunits thereby driving them into their inactive GDP-bound form. Binds to GNAT1. Involved in phototransduction; key element in the recovery phase of visual transduction. The sequence is that of Regulator of G-protein signaling 9 (Rgs9) from Rattus norvegicus (Rat).